A 153-amino-acid polypeptide reads, in one-letter code: Large ribosomal subunit protein bL27m (153 aa).

A mitochondrion-targeting transit peptide spans 1–37 (MINQGLFIRVNNFQLLKASLAYKKASNILTFPPIRTS). Residues 34–57 (IRTSTKHGGGSSKNTGDSAGRRLG) form a disordered region.

Belongs to the bacterial ribosomal protein bL27 family. As to quaternary structure, component of the mitochondrial large ribosomal subunit (mt-LSU). Mature yeast 74S mitochondrial ribosomes consist of a small (37S) and a large (54S) subunit. The 37S small subunit contains a 15S ribosomal RNA (15S mt-rRNA) and at least 32 different proteins. The 54S large subunit contains a 21S rRNA (21S mt-rRNA) and at least 45 different proteins.

It is found in the mitochondrion. Its function is as follows. Component of the mitochondrial ribosome (mitoribosome), a dedicated translation machinery responsible for the synthesis of mitochondrial genome-encoded proteins, including at least some of the essential transmembrane subunits of the mitochondrial respiratory chain. The mitoribosomes are attached to the mitochondrial inner membrane and translation products are cotranslationally integrated into the membrane. This chain is Large ribosomal subunit protein bL27m (mrp7), found in Schizosaccharomyces pombe (strain 972 / ATCC 24843) (Fission yeast).